Reading from the N-terminus, the 474-residue chain is MTQNIGKITQVISAVVDVKFTNNSKLPEILNALECYNAKQRIVLEVAQHIGDDTVRCISMGSTEGLIRGLEVIDTGNPIHIPVGIATLGRIMNVVGEPIDGKGEIKSSTISSIYKPAPDFINQSTERDILVTGIKVVDLLAPYTKGGKIGLFGGAGVGKTVLIMELINNVAKAHGGYTVFAGVGERTREGNDLYHEMIASGVINLEAPEKSKVALVYGQMNEPPGARARVALSGLTIAESFRDMNAGQDVLFFVDNIFRFTQAGAEVSALLGRIPSAVGYQPTLATDMGELQERITSTKHGSITSVQAIYVPADDLTDPAPSTSFAHLDATTVLSRQIAELGIYPAVDPLDSNSQVLDPMIVGEEHYSVARQVQQVLQTYKSLQDIIAILGMDELSEEDKLTVSRARKIQRFLSQPFHVAEVFTGVEGKFVNLDDTIAGFKGLVEGKYDDLPEAAFYMVGTIDEAVEKAKILKI.

Residue 153-160 participates in ATP binding; that stretch reads GGAGVGKT.

This sequence belongs to the ATPase alpha/beta chains family. In terms of assembly, F-type ATPases have 2 components, CF(1) - the catalytic core - and CF(0) - the membrane proton channel. CF(1) has five subunits: alpha(3), beta(3), gamma(1), delta(1), epsilon(1). CF(0) has three main subunits: a(1), b(2) and c(9-12). The alpha and beta chains form an alternating ring which encloses part of the gamma chain. CF(1) is attached to CF(0) by a central stalk formed by the gamma and epsilon chains, while a peripheral stalk is formed by the delta and b chains.

The protein resides in the cell inner membrane. It catalyses the reaction ATP + H2O + 4 H(+)(in) = ADP + phosphate + 5 H(+)(out). In terms of biological role, produces ATP from ADP in the presence of a proton gradient across the membrane. The catalytic sites are hosted primarily by the beta subunits. In Rickettsia typhi (strain ATCC VR-144 / Wilmington), this protein is ATP synthase subunit beta.